A 237-amino-acid polypeptide reads, in one-letter code: 2',3'-cyclic-nucleotide 3'-phosphodiesterase (237 aa).

His21 (proton donor/acceptor) is an active-site residue. Residue Thr23 coordinates substrate. The disordered stretch occupies residues 117–137; the sequence is HLYTTDSHGNTVKKKSKQSQD. His167 functions as the Proton donor/acceptor in the catalytic mechanism. Substrate contacts are provided by Ser169 and Tyr172.

It belongs to the 2H phosphoesterase superfamily. CPD1 family.

Its subcellular location is the golgi apparatus. The catalysed reaction is a nucleoside 2',3'-cyclic phosphate + H2O = a nucleoside 2'-phosphate + H(+). Involved in the metabolism of ADP-ribose 1',2'-cyclic phosphate which is produced as a consequence of tRNA splicing. This Debaryomyces hansenii (strain ATCC 36239 / CBS 767 / BCRC 21394 / JCM 1990 / NBRC 0083 / IGC 2968) (Yeast) protein is 2',3'-cyclic-nucleotide 3'-phosphodiesterase (CPD1).